We begin with the raw amino-acid sequence, 1250 residues long: Protein suppressor of variegation 3-7 (1250 aa).

Disordered regions lie at residues 107–148 and 160–186; these read LNNP…HSYH and HDPG…GGMR. A compositionally biased stretch (polar residues) spans 132–141; the sequence is STKTEPSSDA. Residues 164-175 show a composition bias toward acidic residues; that stretch reads DSQDDDDEDDES. Residues Ser165, Ser175, and Ser176 each carry the phosphoserine modification. 4 C2H2-type zinc fingers span residues 217–236, 319–343, 425–446, and 487–512; these read CLYC…IQQH, CRIC…TKGH, CTLC…TRAH, and CSVC…SEKH. Residues 343 to 354 show a composition bias toward basic and acidic residues; the sequence is HMEALRNLDSDK. The interval 343–398 is disordered; sequence HMEALRNLDSDKRSRKRKRSKSNSVTNSGGDEAEREKESEPEVGPEDAQDTPVVMM. The interval 525–564 is disordered; sequence VGSADGRGGDNMDEEEAAASDQAQSSQTDDSEDNDDDNWS. A compositionally biased stretch (low complexity) spans 543–552; that stretch reads ASDQAQSSQT. Acidic residues predominate over residues 553–563; it reads DDSEDNDDDNW. The C2H2-type 5 zinc finger occupies 605–629; that stretch reads QICKFCRVRFHNEAAKARHELSARH. Positions 642-684 are disordered; it reads KLHQGTNTQTKHNAQDDEESQEQDEEYGEEEEDAEEDSQSNFD. Residues 657-679 are compositionally biased toward acidic residues; the sequence is DDEESQEQDEEYGEEEEDAEEDS. 2 consecutive C2H2-type zinc fingers follow at residues 737-761 and 829-852; these read CKLC…TSRH and CRVC…SRKH. Residues 851–860 are compositionally biased toward basic and acidic residues; it reads KHVENKERQR. The disordered stretch occupies residues 851 to 915; the sequence is KHVENKERQR…PLAKRSRRSM (65 aa). 2 positions are modified to phosphoserine: Ser871 and Ser873. Over residues 879-897 the composition is skewed to basic and acidic residues; sequence DAERQESGMDKESENDMSV. Ser975 carries the post-translational modification Phosphoserine. A BESS domain is found at 987–1026; the sequence is RHVMDLFFDSISPTMKSLPPDLAAEGKSKIMQLVCSLELR. Over residues 1032-1055 the composition is skewed to low complexity; sequence ATTPTPATVSASSKWPSSTTVTPV. Disordered stretches follow at residues 1032-1060, 1079-1116, 1154-1180, and 1205-1236; these read ATTP…TPPA, TTPH…NGSA, QSRT…ADLS, and NTPQ…NGCQ. Composition is skewed to polar residues over residues 1079–1091 and 1104–1114; these read TTPH…QNNN and GASSAQVTING. Positions 1206-1224 are enriched in low complexity; the sequence is TPQMQQPQQAQASITSSTP.

As to quaternary structure, interacts with Su(var)39 through the BESS domain.

The protein localises to the nucleus. Dose-limiting factor in position-effect variegation, the inactivation in some cells of a gene translocated next to heterochromatin. It could play a role in chromosome condensation. This chain is Protein suppressor of variegation 3-7 (Su(var)3-7), found in Drosophila melanogaster (Fruit fly).